The following is a 194-amino-acid chain: Inosine triphosphate pyrophosphatase (194 aa).

11-16 (TGNAKK) is a binding site for ITP. Glu39 is a binding site for Mg(2+). Residues Lys51, 67 to 68 (DT), Lys84, 143 to 146 (FGWD), Lys166, and 171 to 172 (HR) contribute to the ITP site.

It belongs to the HAM1 NTPase family. Homodimer. Mg(2+) serves as cofactor. Requires Mn(2+) as cofactor.

Its subcellular location is the cytoplasm. It carries out the reaction ITP + H2O = IMP + diphosphate + H(+). It catalyses the reaction dITP + H2O = dIMP + diphosphate + H(+). The catalysed reaction is XTP + H2O = XMP + diphosphate + H(+). In terms of biological role, pyrophosphatase that hydrolyzes non-canonical purine nucleotides such as inosine triphosphate (ITP), deoxyinosine triphosphate (dITP) or xanthosine 5'-triphosphate (XTP) to their respective monophosphate derivatives. The enzyme does not distinguish between the deoxy- and ribose forms. Probably excludes non-canonical purines from RNA and DNA precursor pools, thus preventing their incorporation into RNA and DNA and avoiding chromosomal lesions. In Dictyostelium discoideum (Social amoeba), this protein is Inosine triphosphate pyrophosphatase (itpa).